Consider the following 105-residue polypeptide: Small ribosomal subunit protein eS24 (105 aa).

It belongs to the eukaryotic ribosomal protein eS24 family.

In Ignicoccus hospitalis (strain KIN4/I / DSM 18386 / JCM 14125), this protein is Small ribosomal subunit protein eS24.